Here is a 93-residue protein sequence, read N- to C-terminus: Ferredoxin-2 (93 aa).

Residues 2–91 enclose the 2Fe-2S ferredoxin-type domain; sequence YKVTLKTPDG…DVVIETHKED (90 aa). [2Fe-2S] cluster contacts are provided by Cys37, Cys42, Cys45, and Cys75.

Belongs to the 2Fe2S plant-type ferredoxin family. It depends on [2Fe-2S] cluster as a cofactor.

The protein resides in the plastid. The protein localises to the chloroplast. Its function is as follows. Ferredoxins are iron-sulfur proteins that transfer electrons in a wide variety of metabolic reactions. The protein is Ferredoxin-2 of Equisetum telmateia (Great horsetail).